Reading from the N-terminus, the 204-residue chain is Protein Nef (204 aa).

The disordered stretch occupies residues 1–27; the sequence is MGNKWSKSWPQVRDRMRRAAPAPAADG. Residue Gly-2 is the site of N-myristoyl glycine; by host attachment. At Ser-6 the chain carries Phosphoserine; by host. Residues 60 to 63 form an acidic; interacts with host PACS1 and PACS2; stabilizes the interaction of NEF/MHC-I with host AP1M1; necessary for MHC-I internalization region; that stretch reads TEEE. The interval 67-76 is SH3-binding; interaction with Src family tyrosine kinases; the sequence is PVRPQVPLRP. Positions 70 to 73 match the PxxP; stabilizes the interaction of NEF/MHC-I with host AP1M1; necessary for MHC-I internalization motif; that stretch reads PQVP. The tract at residues 106 to 122 is mediates dimerization, Nef-PTE1 interaction; it reads EILDLWVHNTQGYFPDW. The segment at 146-178 is binding to ATP6V1H; it reads VDPSEVEEANEGENNCLLHPACQHGIEDEEREV. Residues 162 to 163 carry the Dileucine internalization motif; necessary for CD4 internalization motif; sequence LL. Positions 172–173 match the Diacidic; necessary for CD4 internalization motif; it reads ED.

The protein belongs to the lentivirus primate group Nef protein family. In terms of assembly, monomer; cytosolic form. Homodimer; membrane bound form. Interacts with Nef associated p21-activated kinase (PAK2); this interaction activates PAK2. Associates with the Nef-MHC-I-AP1 complex; this complex is required for MHC-I internalization. Interacts (via C-terminus) with host PI3-kinase. Interacts with host PACS1; this interaction seems to be weak. Interacts with host PACS2. Interacts with host LCK and MAPK3; these interactions inhibit the kinase activity of the latter. Interacts with host ATP6V1H; this interaction may play a role in CD4 endocytosis. Associates with the CD4-Nef-AP2 complex; this complex is required for CD4 internalization. Interacts with host AP2 subunit alpha and AP2 subunit sigma2. Interacts with TCR-zeta chain; this interaction up-regulates the Fas ligand (FasL) surface expression. Interacts with host HCK, LYN, and SRC; these interactions activate the Src family kinases. Interacts with MAP3K5; this interaction inhibits the Fas and TNFR-mediated death signals. Interacts with beta-COP and PTE1. Interacts with human RACK1; this increases Nef phosphorylation by PKC. Interacts with TP53; this interaction decreases the half-life of TP53, protecting the infected cell against p53-mediated apoptosis. In terms of processing, the virion-associated Nef proteins are cleaved by the viral protease to release the soluble C-terminal core protein. Nef is probably cleaved concomitantly with viral structural proteins on maturation of virus particles. Post-translationally, myristoylated. Phosphorylated on serine residues, probably by host PKCdelta and theta.

It is found in the host cell membrane. Its subcellular location is the virion. The protein localises to the secreted. It localises to the host Golgi apparatus membrane. In terms of biological role, factor of infectivity and pathogenicity, required for optimal virus replication. Alters numerous pathways of T-lymphocyte function and down-regulates immunity surface molecules in order to evade host defense and increase viral infectivity. Alters the functionality of other immunity cells, like dendritic cells, monocytes/macrophages and NK cells. Its function is as follows. In infected CD4(+) T-lymphocytes, down-regulates the surface MHC-I, mature MHC-II, CD4, CD28, CCR5 and CXCR4 molecules. Mediates internalization and degradation of host CD4 through the interaction of with the cytoplasmic tail of CD4, the recruitment of AP-2 (clathrin adapter protein complex 2), internalization through clathrin coated pits, and subsequent transport to endosomes and lysosomes for degradation. Diverts host MHC-I molecules to the trans-Golgi network-associated endosomal compartments by an endocytic pathway to finally target them for degradation. MHC-I down-regulation may involve AP-1 (clathrin adapter protein complex 1) or possibly Src family kinase-ZAP70/Syk-PI3K cascade recruited by PACS2. In consequence infected cells are masked for immune recognition by cytotoxic T-lymphocytes. Decreasing the number of immune receptors also prevents reinfection by more HIV particles (superinfection). Down-regulates host SERINC3 and SERINC5 thereby excluding these proteins from the viral particles. Virion infectivity is drastically higher when SERINC3 or SERINC5 are excluded from the viral envelope, because these host antiviral proteins impair the membrane fusion event necessary for subsequent virion penetration. Bypasses host T-cell signaling by inducing a transcriptional program nearly identical to that of anti-CD3 cell activation. Interaction with TCR-zeta chain up-regulates the Fas ligand (FasL). Increasing surface FasL molecules and decreasing surface MHC-I molecules on infected CD4(+) cells send attacking cytotoxic CD8+ T-lymphocytes into apoptosis. Functionally, plays a role in optimizing the host cell environment for viral replication without causing cell death by apoptosis. Protects the infected cells from apoptosis in order to keep them alive until the next virus generation is ready to strike. Inhibits the Fas and TNFR-mediated death signals by blocking MAP3K5/ASK1. Decreases the half-life of TP53, protecting the infected cell against p53-mediated apoptosis. Inhibits the apoptotic signals regulated by the Bcl-2 family proteins through the formation of a Nef/PI3-kinase/PAK2 complex that leads to activation of PAK2 and induces phosphorylation of host BAD. In terms of biological role, extracellular Nef protein targets CD4(+) T-lymphocytes for apoptosis by interacting with CXCR4 surface receptors. The polypeptide is Protein Nef (Homo sapiens (Human)).